A 292-amino-acid chain; its full sequence is Xyloglucan endotransglucosylase/hydrolase protein 2 (292 aa).

A signal peptide spans 1–24 (MNRIRYCFELVSVLFLMFTANARA). The GH16 domain occupies 25–219 (RGRGAIDFDV…WAYAPFKAQY (195 aa)). E106 serves as the catalytic Nucleophile. E110 functions as the Proton donor in the catalytic mechanism. Residues E110, 123-125 (QTN), 133-135 (GRE), 198-199 (NW), and G203 each bind xyloglucan. 2 cysteine pairs are disulfide-bonded: C227–C239 and C275–C288. R280 is a binding site for xyloglucan.

The protein belongs to the glycosyl hydrolase 16 family. XTH group 1 subfamily. Post-translationally, contains at least one intrachain disulfide bond essential for its enzymatic activity.

Its subcellular location is the secreted. It localises to the cell wall. It is found in the extracellular space. The protein resides in the apoplast. It catalyses the reaction breaks a beta-(1-&gt;4) bond in the backbone of a xyloglucan and transfers the xyloglucanyl segment on to O-4 of the non-reducing terminal glucose residue of an acceptor, which can be a xyloglucan or an oligosaccharide of xyloglucan.. Its function is as follows. May catalyze xyloglucan endohydrolysis (XEH) and/or endotransglycosylation (XET). Cleaves and religates xyloglucan polymers, an essential constituent of the primary cell wall, and thereby participates in cell wall construction of growing tissues. This chain is Xyloglucan endotransglucosylase/hydrolase protein 2 (XTH2), found in Arabidopsis thaliana (Mouse-ear cress).